A 140-amino-acid chain; its full sequence is Nucleoside diphosphate kinase (140 aa).

Lys11, Phe59, Arg87, Thr93, Arg104, and Asn114 together coordinate ATP. The Pros-phosphohistidine intermediate role is filled by His117.

The protein belongs to the NDK family. As to quaternary structure, homotetramer. It depends on Mg(2+) as a cofactor.

It localises to the cytoplasm. The catalysed reaction is a 2'-deoxyribonucleoside 5'-diphosphate + ATP = a 2'-deoxyribonucleoside 5'-triphosphate + ADP. It carries out the reaction a ribonucleoside 5'-diphosphate + ATP = a ribonucleoside 5'-triphosphate + ADP. Functionally, major role in the synthesis of nucleoside triphosphates other than ATP. The ATP gamma phosphate is transferred to the NDP beta phosphate via a ping-pong mechanism, using a phosphorylated active-site intermediate. The chain is Nucleoside diphosphate kinase from Granulibacter bethesdensis (strain ATCC BAA-1260 / CGDNIH1).